The primary structure comprises 567 residues: UPF0313 protein Tpet_0582 (567 aa).

Positions 288–560 (KAIETVKFSI…NKMKENVLFK (273 aa)) constitute a Radical SAM core domain. [4Fe-4S] cluster is bound by residues C303, C307, and C310.

It belongs to the UPF0313 family. Requires [4Fe-4S] cluster as cofactor.

The sequence is that of UPF0313 protein Tpet_0582 from Thermotoga petrophila (strain ATCC BAA-488 / DSM 13995 / JCM 10881 / RKU-1).